Consider the following 261-residue polypeptide: Small ribosomal subunit protein uS2 (261 aa).

The residue at position 2 (Ser2) is an N-acetylserine. Residues 215 to 261 (AEEAKTTEDVEEAAPVDADEWTGETEEVDWAESGATPAVEDAAASNW) are disordered. Over residues 223–244 (DVEEAAPVDADEWTGETEEVDW) the composition is skewed to acidic residues.

The protein belongs to the universal ribosomal protein uS2 family. In terms of assembly, component of the small ribosomal subunit. Mature ribosomes consist of a small (40S) and a large (60S) subunit. The 40S subunit contains about 33 different proteins and 1 molecule of RNA (18S). The 60S subunit contains about 49 different proteins and 3 molecules of RNA (25S, 5.8S and 5S). Interacts with RPS21.

Its subcellular location is the cytoplasm. In terms of biological role, required for the assembly and/or stability of the 40S ribosomal subunit. Required for the processing of the 20S rRNA-precursor to mature 18S rRNA in a late step of the maturation of 40S ribosomal subunits. The protein is Small ribosomal subunit protein uS2 of Scheffersomyces stipitis (strain ATCC 58785 / CBS 6054 / NBRC 10063 / NRRL Y-11545) (Yeast).